The sequence spans 214 residues: Ribonuclease T (214 aa).

Residues 20–195 (VVVDVETAGF…YDTQKTAELF (176 aa)) enclose the Exonuclease domain. Residues aspartate 23, glutamate 25, histidine 182, and aspartate 187 each contribute to the Mg(2+) site. Histidine 182 functions as the Proton donor/acceptor in the catalytic mechanism.

It belongs to the RNase T family. In terms of assembly, homodimer. Requires Mg(2+) as cofactor.

Functionally, trims short 3' overhangs of a variety of RNA species, leaving a one or two nucleotide 3' overhang. Responsible for the end-turnover of tRNA: specifically removes the terminal AMP residue from uncharged tRNA (tRNA-C-C-A). Also appears to be involved in tRNA biosynthesis. The sequence is that of Ribonuclease T from Vibrio parahaemolyticus serotype O3:K6 (strain RIMD 2210633).